The chain runs to 322 residues: Thymidylate synthase (322 aa).

DUMP-binding positions include arginine 25 and 184-185; that span reads RR. Cysteine 204 acts as the Nucleophile in catalysis. DUMP-binding positions include 224 to 227, asparagine 235, and 265 to 267; these read RSGD and HIY. (6R)-5,10-methylene-5,6,7,8-tetrahydrofolate is bound at residue aspartate 227. (6R)-5,10-methylene-5,6,7,8-tetrahydrofolate is bound at residue alanine 321.

It belongs to the thymidylate synthase family. Bacterial-type ThyA subfamily. As to quaternary structure, homodimer.

The protein resides in the cytoplasm. The catalysed reaction is dUMP + (6R)-5,10-methylene-5,6,7,8-tetrahydrofolate = 7,8-dihydrofolate + dTMP. It functions in the pathway pyrimidine metabolism; dTTP biosynthesis. Functionally, catalyzes the reductive methylation of 2'-deoxyuridine-5'-monophosphate (dUMP) to 2'-deoxythymidine-5'-monophosphate (dTMP) while utilizing 5,10-methylenetetrahydrofolate (mTHF) as the methyl donor and reductant in the reaction, yielding dihydrofolate (DHF) as a by-product. This enzymatic reaction provides an intracellular de novo source of dTMP, an essential precursor for DNA biosynthesis. The sequence is that of Thymidylate synthase from Leuconostoc mesenteroides subsp. mesenteroides (strain ATCC 8293 / DSM 20343 / BCRC 11652 / CCM 1803 / JCM 6124 / NCDO 523 / NBRC 100496 / NCIMB 8023 / NCTC 12954 / NRRL B-1118 / 37Y).